A 306-amino-acid chain; its full sequence is tRNA dimethylallyltransferase 1 (306 aa).

15–22 contacts ATP; it reads GPTGSGKS. 17–22 contacts substrate; that stretch reads TGSGKS. Residues 40–43 form an interaction with substrate tRNA region; that stretch reads DSMQ.

The protein belongs to the IPP transferase family. Monomer. Requires Mg(2+) as cofactor.

The catalysed reaction is adenosine(37) in tRNA + dimethylallyl diphosphate = N(6)-dimethylallyladenosine(37) in tRNA + diphosphate. Functionally, catalyzes the transfer of a dimethylallyl group onto the adenine at position 37 in tRNAs that read codons beginning with uridine, leading to the formation of N6-(dimethylallyl)adenosine (i(6)A). The chain is tRNA dimethylallyltransferase 1 from Citrifermentans bemidjiense (strain ATCC BAA-1014 / DSM 16622 / JCM 12645 / Bem) (Geobacter bemidjiensis).